A 372-amino-acid polypeptide reads, in one-letter code: Probable basic-leucine zipper transcription factor G (372 aa).

2 disordered regions span residues 1 to 20 and 176 to 234; these read MLSV…QQQQ and TTNN…EKFE. 2 stretches are compositionally biased toward low complexity: residues 11-20 and 176-215; these read QQPQQQQQQQ and TTNN…KSNT. Residues 223–234 are compositionally biased toward polar residues; the sequence is IRNSNSTFEKFE. The region spanning 277 to 340 is the bZIP domain; that stretch reads ELKRQKRLIK…LILKAEVGQL (64 aa). Positions 279-301 are basic motif; that stretch reads KRQKRLIKNRESAHLSRQRKRER. A leucine-zipper region spans residues 305-340; it reads LEHRVEELSSNSIDINKTLSSLENENLILKAEVGQL.

This sequence belongs to the bZIP family.

Its subcellular location is the nucleus. In terms of biological role, probable transcriptional regulator. The chain is Probable basic-leucine zipper transcription factor G (bzpG) from Dictyostelium discoideum (Social amoeba).